A 143-amino-acid polypeptide reads, in one-letter code: Peptide methionine sulfoxide reductase MsrB (143 aa).

The MsrB domain occupies 16-139; it reads DAELRRRLTP…NSAALNFESR (124 aa). Residues Cys55, Cys58, Cys104, and Cys107 each coordinate Zn(2+). Cys128 acts as the Nucleophile in catalysis.

Belongs to the MsrB Met sulfoxide reductase family. Requires Zn(2+) as cofactor.

It catalyses the reaction L-methionyl-[protein] + [thioredoxin]-disulfide + H2O = L-methionyl-(R)-S-oxide-[protein] + [thioredoxin]-dithiol. This chain is Peptide methionine sulfoxide reductase MsrB, found in Burkholderia cenocepacia (strain ATCC BAA-245 / DSM 16553 / LMG 16656 / NCTC 13227 / J2315 / CF5610) (Burkholderia cepacia (strain J2315)).